A 461-amino-acid polypeptide reads, in one-letter code: Ornithine decarboxylase (461 aa).

Lys69 carries the post-translational modification N6-(pyridoxal phosphate)lysine. Residues Ser200, Gly237, and 274–277 (EPGR) each bind pyridoxal 5'-phosphate. Ser303 is subject to Phosphoserine; by CK2. Residue 331–332 (YD) participates in substrate binding. Cys360 serves as the catalytic Proton donor; shared with dimeric partner. Residue Cys360 is modified to S-nitrosocysteine. Residue Asp361 coordinates substrate. Residue Tyr389 participates in pyridoxal 5'-phosphate binding.

Belongs to the Orn/Lys/Arg decarboxylase class-II family. In terms of assembly, homodimer. Only the dimer is catalytically active, as the active sites are constructed of residues from both monomers. Requires pyridoxal 5'-phosphate as cofactor.

It catalyses the reaction L-ornithine + H(+) = putrescine + CO2. It functions in the pathway amine and polyamine biosynthesis; putrescine biosynthesis via L-ornithine pathway; putrescine from L-ornithine: step 1/1. Inhibited by antizymes (AZs) OAZ1, OAZ2 and OAZ3 in response to polyamine levels. AZs inhibit the assembly of the functional homodimer by binding to ODC monomers. Additionally, OAZ1 targets ODC monomers for ubiquitin-independent proteolytic destruction by the 26S proteasome. Functionally, catalyzes the first and rate-limiting step of polyamine biosynthesis that converts ornithine into putrescine, which is the precursor for the polyamines, spermidine and spermine. Polyamines are essential for cell proliferation and are implicated in cellular processes, ranging from DNA replication to apoptosis. The protein is Ornithine decarboxylase (Odc1) of Mus pahari (Gairdner's shrew-mouse).